We begin with the raw amino-acid sequence, 521 residues long: Cytokinin dehydrogenase 9 (521 aa).

Positions 1–22 are cleaved as a signal peptide; sequence MRPSLLQYLKLLLLLALGGVTT. Asparagine 57 is a glycosylation site (N-linked (GlcNAc...) asparagine). In terms of domain architecture, FAD-binding PCMH-type spans 59–237; it reads SSFPPVAVLH…TRARIPLEPA (179 aa). Residues alanine 95, glycine 97, and glycine 99 each contribute to the FAD site. Histidine 100 is subject to Pros-8alpha-FAD histidine. Serine 101, glutamine 105, aspartate 161, threonine 166, serine 172, valine 176, and isoleucine 227 together coordinate FAD. 3 N-linked (GlcNAc...) asparagine glycosylation sites follow: asparagine 278, asparagine 412, and asparagine 418. Tyrosine 469 provides a ligand contact to FAD. A glycan (N-linked (GlcNAc...) asparagine) is linked at asparagine 472. Glutamine 507 contacts FAD.

The protein belongs to the oxygen-dependent FAD-linked oxidoreductase family. Monomer. Requires FAD as cofactor. As to expression, expressed in inflorescence meristems.

The protein localises to the secreted. It localises to the extracellular space. It is found in the cytoplasm. The protein resides in the cytosol. Its subcellular location is the nucleus. It catalyses the reaction N(6)-dimethylallyladenine + A + H2O = 3-methyl-2-butenal + adenine + AH2. Its function is as follows. Catalyzes the oxidation of cytokinins, a family of N(6)-substituted adenine derivatives that are plant hormones, where the substituent is an isopentenyl group. Possesses cytokinin oxidase activity toward trans-zeatin (tZ) and N6-(2-isopentenyl)adenine (2iP) in vitro. Functions as a primary strigolactone-responsive gene to regulate rice tillering, plant height, and panicle size, likely via a secondary response gene, RR5, which encodes a cytokinin-inducible rice type-A response regulator that seems to act as negative regulator of the cytokinin signaling. The polypeptide is Cytokinin dehydrogenase 9 (Oryza sativa subsp. japonica (Rice)).